Reading from the N-terminus, the 805-residue chain is Centrosomal protein of 85 kDa-like (805 aa).

Disordered regions lie at residues 1–27 and 50–89; these read MWGRFLAPEASGRDSPGGARSFPAGPD and RNNHIRRHSIASDSGDTGIGTSCSDSVEDHSTSSGTLSFK. Phosphoserine is present on serine 15. Polar residues predominate over residues 60–74; that stretch reads ASDSGDTGIGTSCSD. Phosphoserine is present on serine 207. Positions 439–682 form a coiled coil; it reads SQQGEFEQKL…LENQRQTDET (244 aa).

It belongs to the CEP85 family. As to expression, isoform 1 and isoform 4 are expressed in spleen, lymph, thymus, tonsil and peripheral blood leukocytes, with isoform 1 expressed at higher levels. Isoform 4 is detected in K-562 leukemia cells and in the blood of precursor T lymphoblastic lymphoma (T-ALL) patients.

Its subcellular location is the cytoplasm. The protein resides in the cytoskeleton. It is found in the microtubule organizing center. It localises to the centrosome. In terms of biological role, plays an essential role in neuronal cell migration. This chain is Centrosomal protein of 85 kDa-like, found in Homo sapiens (Human).